The sequence spans 251 residues: Vitamin B12 import ATP-binding protein BtuD (251 aa).

An ABC transporter domain is found at 2–236 (IRVNSLQVDS…EVLQSVFGTS (235 aa)). Residue 30-37 (GPNGCGKS) participates in ATP binding.

It belongs to the ABC transporter superfamily. Vitamin B12 importer (TC 3.A.1.13.1) family. The complex is composed of two ATP-binding proteins (BtuD), two transmembrane proteins (BtuC) and a solute-binding protein (BtuF).

It localises to the cell inner membrane. It carries out the reaction an R-cob(III)alamin(out) + ATP + H2O = an R-cob(III)alamin(in) + ADP + phosphate + H(+). Its function is as follows. Part of the ABC transporter complex BtuCDF involved in vitamin B12 import. Responsible for energy coupling to the transport system. In Vibrio cholerae serotype O1 (strain ATCC 39541 / Classical Ogawa 395 / O395), this protein is Vitamin B12 import ATP-binding protein BtuD.